The sequence spans 480 residues: Protein nucleotidyltransferase YdiU (480 aa).

Residues Gly-86, Gly-88, Arg-89, Lys-109, Asp-121, Gly-122, Arg-172, and Arg-179 each contribute to the ATP site. Asp-248 (proton acceptor) is an active-site residue. The Mg(2+) site is built by Asn-249 and Asp-258. Residue Asp-258 participates in ATP binding.

It belongs to the SELO family. Requires Mg(2+) as cofactor. Mn(2+) serves as cofactor.

The catalysed reaction is L-seryl-[protein] + ATP = 3-O-(5'-adenylyl)-L-seryl-[protein] + diphosphate. The enzyme catalyses L-threonyl-[protein] + ATP = 3-O-(5'-adenylyl)-L-threonyl-[protein] + diphosphate. It catalyses the reaction L-tyrosyl-[protein] + ATP = O-(5'-adenylyl)-L-tyrosyl-[protein] + diphosphate. It carries out the reaction L-histidyl-[protein] + UTP = N(tele)-(5'-uridylyl)-L-histidyl-[protein] + diphosphate. The catalysed reaction is L-seryl-[protein] + UTP = O-(5'-uridylyl)-L-seryl-[protein] + diphosphate. The enzyme catalyses L-tyrosyl-[protein] + UTP = O-(5'-uridylyl)-L-tyrosyl-[protein] + diphosphate. Nucleotidyltransferase involved in the post-translational modification of proteins. It can catalyze the addition of adenosine monophosphate (AMP) or uridine monophosphate (UMP) to a protein, resulting in modifications known as AMPylation and UMPylation. This is Protein nucleotidyltransferase YdiU from Enterobacter sp. (strain 638).